A 253-amino-acid chain; its full sequence is Phosphonates import ATP-binding protein PhnC (253 aa).

The ABC transporter domain occupies 4-247 (VRFEGVTKRF…QAVAMIYRAG (244 aa)). 36-43 (GLSGSGKS) is a binding site for ATP.

The protein belongs to the ABC transporter superfamily. Phosphonates importer (TC 3.A.1.9.1) family. In terms of assembly, the complex is composed of two ATP-binding proteins (PhnC), two transmembrane proteins (PhnE) and a solute-binding protein (PhnD).

Its subcellular location is the cell membrane. The enzyme catalyses phosphonate(out) + ATP + H2O = phosphonate(in) + ADP + phosphate + H(+). Its function is as follows. Part of the ABC transporter complex PhnCDE involved in phosphonates import. Responsible for energy coupling to the transport system. The chain is Phosphonates import ATP-binding protein PhnC from Frankia casuarinae (strain DSM 45818 / CECT 9043 / HFP020203 / CcI3).